Here is a 339-residue protein sequence, read N- to C-terminus: Ketol-acid reductoisomerase (NADP(+)) (339 aa).

A KARI N-terminal Rossmann domain is found at 1–182 (MKVYYDSDAD…GGGRSGVIET (182 aa)). NADP(+) is bound by residues 24-27 (YGSQ), Arg48, Ser51, Ser53, and 83-86 (DEHQ). His108 is a catalytic residue. Gly134 is an NADP(+) binding site. Positions 183–328 (TFREEVETDL…ARLRKMMPWI (146 aa)) constitute a KARI C-terminal knotted domain. Mg(2+)-binding residues include Asp191, Glu195, Glu227, and Glu231. Ser252 serves as a coordination point for substrate.

It belongs to the ketol-acid reductoisomerase family. Mg(2+) is required as a cofactor.

The enzyme catalyses (2R)-2,3-dihydroxy-3-methylbutanoate + NADP(+) = (2S)-2-acetolactate + NADPH + H(+). The catalysed reaction is (2R,3R)-2,3-dihydroxy-3-methylpentanoate + NADP(+) = (S)-2-ethyl-2-hydroxy-3-oxobutanoate + NADPH + H(+). It functions in the pathway amino-acid biosynthesis; L-isoleucine biosynthesis; L-isoleucine from 2-oxobutanoate: step 2/4. It participates in amino-acid biosynthesis; L-valine biosynthesis; L-valine from pyruvate: step 2/4. Functionally, involved in the biosynthesis of branched-chain amino acids (BCAA). Catalyzes an alkyl-migration followed by a ketol-acid reduction of (S)-2-acetolactate (S2AL) to yield (R)-2,3-dihydroxy-isovalerate. In the isomerase reaction, S2AL is rearranged via a Mg-dependent methyl migration to produce 3-hydroxy-3-methyl-2-ketobutyrate (HMKB). In the reductase reaction, this 2-ketoacid undergoes a metal-dependent reduction by NADPH to yield (R)-2,3-dihydroxy-isovalerate. The chain is Ketol-acid reductoisomerase (NADP(+)) from Zymomonas mobilis subsp. mobilis (strain ATCC 31821 / ZM4 / CP4).